The sequence spans 183 residues: Lipid droplet coating protein Cap20 (183 aa).

The protein belongs to the perilipin family.

Its subcellular location is the lipid droplet. In terms of biological role, lipid droplet coating protein that regulates lipid metabolism, appressorial turgor pressure, and virulence. Appressorial turgor pressure is important for the mechanical penetration of the host cuticle during infection. This Colletotrichum gloeosporioides (Anthracnose fungus) protein is Lipid droplet coating protein Cap20 (Cap20).